A 288-amino-acid chain; its full sequence is Lysosomal thioesterase PPT2-B (288 aa).

Positions 1–20 (MRGYLLLLPLLLCLVDNSVS) are cleaved as a signal peptide. Cys95 and Cys103 are joined by a disulfide. Ser97 serves as the catalytic Nucleophile. Asn143 is a glycosylation site (N-linked (GlcNAc...) asparagine). Cys151 and Cys162 are oxidised to a cystine. A glycan (N-linked (GlcNAc...) asparagine) is linked at Asn192. Catalysis depends on residues Asp214 and His269. The N-linked (GlcNAc...) asparagine glycan is linked to Asn275.

Belongs to the palmitoyl-protein thioesterase family.

It localises to the lysosome. The enzyme catalyses hexadecanoyl-CoA + H2O = hexadecanoate + CoA + H(+). It carries out the reaction S-hexadecanoyl-N-acetylcysteamine + H2O = N-acetylcysteamine + hexadecanoate + H(+). Catalyzes the cleavage of thioester bonds from S-palmitoyl-CoA or S-palmitoyl-N-acetylcysteamine (unbranched structures) but does not have activity against palmitoylcysteine or palmitoylated proteins, branched structures or bulky head groups. Conversely, hydrolyzes both long and short chain fatty acyl-CoA substrate. The sequence is that of Lysosomal thioesterase PPT2-B (ppt2-b) from Xenopus laevis (African clawed frog).